The sequence spans 329 residues: PDZ and LIM domain protein 1 (329 aa).

T2 carries the N-acetylthreonine modification. Residues T3–E85 enclose the PDZ domain. Phosphoserine is present on residues S90 and S130. Residue Y144 is modified to Phosphotyrosine. One can recognise an LIM zinc-binding domain in the interval P258–P317. Zn(2+) is bound by residues C260, C263, H280, C283, C286, C289, C307, and H310. A Phosphothreonine modification is found at T316. Y321 is modified (phosphotyrosine).

In terms of assembly, interacts with ACTN1, ACTN2 and ACTN4. Interacts with PDLIM4. Strongly expressed in the heart and skeletal muscle, moderately expressed in the spleen, small intestine, colon, placenta, and lung. A lower level expression is seen in liver, thymus, kidney, prostate and pancreas and is not found in the brain, testis, ovary, and peripheral blood leukocytes.

The protein resides in the cytoplasm. The protein localises to the cytoskeleton. Its subcellular location is the myofibril. It is found in the sarcomere. It localises to the z line. Functionally, cytoskeletal protein that may act as an adapter that brings other proteins (like kinases) to the cytoskeleton. Involved in assembly, disassembly and directioning of stress fibers in fibroblasts. Required for the localization of ACTN1 and PALLD to stress fibers. Required for cell migration and in maintaining cell polarity of fibroblasts. This is PDZ and LIM domain protein 1 (PDLIM1) from Homo sapiens (Human).